Here is a 118-residue protein sequence, read N- to C-terminus: MSCQQSQQQCQPPPKCTPKCPPKCPTPKCPPKCPPKCPPVSSCCSVSSGGCCGSSSGGSCGSSSGGCCSSGGGGCCLSHHRHHRSHRHRPQSSDCCSQPSGGSSCCGGGSGQHSGGCC.

Over residues 1–10 (MSCQQSQQQC) the composition is skewed to low complexity. Disordered regions lie at residues 1-23 (MSCQQSQQQCQPPPKCTPKCPPK) and 84-118 (RSHRHRPQSSDCCSQPSGGSSCCGGGSGQHSGGCC). Positions 11–23 (QPPPKCTPKCPPK) are enriched in pro residues. Residues 92-103 (SSDCCSQPSGGS) show a composition bias toward low complexity. Residues 104–118 (SCCGGGSGQHSGGCC) are compositionally biased toward gly residues.

It belongs to the LCE family. As to quaternary structure, interacts with CYSRT1. Skin-specific. Expression was readily detected in adult trunk skin, adult arm skin, fetal skin, penal skin, vulva, esophagus and tongue. Not expressed in the cervix, rectum, lung, colon, or placenta.

Its function is as follows. Precursors of the cornified envelope of the stratum corneum. The chain is Late cornified envelope protein 1E (LCE1E) from Homo sapiens (Human).